The following is a 139-amino-acid chain: Mannose-specific lectin (139 aa).

Positions aspartate 1–histidine 109 constitute a Bulb-type lectin domain. Positions 26, 28, 30, 34, 37, 38, 41, 42, 44, 57, 59, 61, 65, 72, 73, 76, 83, 89, 91, 93, 97, and 102 each coordinate alpha-D-mannopyranose. Cysteine 29 and cysteine 52 are disulfide-bonded.

As to quaternary structure, homotetramer; antiparallel. Detected in bulbs (at protein level).

It is found in the secreted. In terms of biological role, mannose-specific lectin. Displays antiviral activity and therefore may contribute to defense against infections. Shows agglutinating activity towards rabbit erythrocytes. In Narcissus tazetta (Cream narcissus), this protein is Mannose-specific lectin.